Consider the following 99-residue polypeptide: UPF0473 protein Athe_1150 (99 aa).

It belongs to the UPF0473 family.

This is UPF0473 protein Athe_1150 from Caldicellulosiruptor bescii (strain ATCC BAA-1888 / DSM 6725 / KCTC 15123 / Z-1320) (Anaerocellum thermophilum).